Consider the following 799-residue polypeptide: Disintegrin and metalloproteinase domain-containing protein B (799 aa).

The N-terminal stretch at 1 to 23 is a signal peptide; that stretch reads MKAFSCLLSVIATAASLFQHVDA. Topologically, residues 24 to 707 are extracellular; that stretch reads RSHARDKLNN…VSDWVSRHKP (684 aa). 5 N-linked (GlcNAc...) asparagine glycosylation sites follow: N33, N227, N228, N314, and N408. The Peptidase M12B domain occupies 272-511; it reads KVALIGVVAD…RTILTSCLTT (240 aa). 3 cysteine pairs are disulfide-bonded: C396–C496, C449–C460, and C581–C601. H432 provides a ligand contact to Zn(2+). The active site involves E433. Zn(2+) is bound by residues H436 and H442. A Disintegrin domain is found at 520-609; it reads GQQCGNGIVE…DCPHDIHSKD (90 aa). The chain crosses the membrane as a helical span at residues 708 to 728; sequence IVIGVAVGAGCLLLLAIASCI. At 729 to 799 the chain is on the cytoplasmic side; the sequence is CGRSRRQRPR…PGHLPSTRYA (71 aa). Residues 753-799 are disordered; that stretch reads VYNGWNGAPPNAQQSSPGGHPPYNNIPPPINAPPPAYPGHLPSTRYA. Positions 776–789 are enriched in pro residues; sequence NNIPPPINAPPPAY.

Requires Zn(2+) as cofactor.

It is found in the membrane. Probable zinc protease. In Arthroderma benhamiae (strain ATCC MYA-4681 / CBS 112371) (Trichophyton mentagrophytes), this protein is Disintegrin and metalloproteinase domain-containing protein B (ADM-B).